The chain runs to 360 residues: Mitogen-activated protein kinase 14 (360 aa).

Position 2 is an N-acetylserine (serine 2). Position 2 is a phosphoserine (serine 2). Threonine 16 bears the Phosphothreonine mark. Residues 24–308 (YQNLSPVGSG…AAQALAHAYF (285 aa)) enclose the Protein kinase domain. Residues 30-38 (VGSGAYGSV) and lysine 53 contribute to the ATP site. The residue at position 53 (lysine 53) is an N6-acetyllysine. Aspartate 150 serves as the catalytic Proton acceptor. Residue lysine 152 is modified to N6-acetyllysine. Threonine 180 is subject to Phosphothreonine. Residues 180 to 182 (TGY) carry the TXY motif. Tyrosine 182 bears the Phosphotyrosine mark. Phosphotyrosine; by ZAP70 is present on tyrosine 323.

It belongs to the protein kinase superfamily. CMGC Ser/Thr protein kinase family. MAP kinase subfamily. As to quaternary structure, component of a signaling complex containing at least AKAP13, PKN1, MAPK14, ZAK and MAP2K3. Within this complex, AKAP13 interacts directly with PKN1, which in turn recruits MAPK14, MAP2K3 and ZAK. Binds to a kinase interaction motif within the protein tyrosine phosphatase, PTPRR. This interaction retains MAPK14 in the cytoplasm and prevents nuclear accumulation. Interacts with SPAG9 and GADD45A. Interacts with CDC25B, CDC25C, DUSP1, DUSP10, DUSP16, NP60, SUPT20H and TAB1. Interacts with casein kinase II subunits CSNK2A1 and CSNK2B. Interacts with PPM1D. Interacts with CDK5RAP3; recruits PPM1D to MAPK14 and may regulate its dephosphorylation. Interacts with DUSP2; this interaction does not lead to catalytic activation of DUSP2 and dephosphrylation of MAPK14. Mg(2+) is required as a cofactor. In terms of processing, dually phosphorylated on Thr-180 and Tyr-182 by the MAP2Ks MAP2K3/MKK3, MAP2K4/MKK4 and MAP2K6/MKK6 in response to inflammatory cytokines, environmental stress or growth factors, which activates the enzyme. Dual phosphorylation can also be mediated by TAB1-mediated autophosphorylation. TCR engagement in T-cells also leads to Tyr-323 phosphorylation by ZAP70. Dephosphorylated and inactivated by DUPS1, DUSP10 and DUSP16. PPM1D also mediates dephosphorylation and inactivation of MAPK14. Post-translationally, acetylated at Lys-53 and Lys-152 by KAT2B and EP300. Acetylation at Lys-53 increases the affinity for ATP and enhances kinase activity. Lys-53 and Lys-152 are deacetylated by HDAC3. Ubiquitinated. Ubiquitination leads to degradation by the proteasome pathway.

Its subcellular location is the cytoplasm. It is found in the nucleus. It catalyses the reaction L-seryl-[protein] + ATP = O-phospho-L-seryl-[protein] + ADP + H(+). The enzyme catalyses L-threonyl-[protein] + ATP = O-phospho-L-threonyl-[protein] + ADP + H(+). With respect to regulation, activated by cell stresses such as DNA damage, heat shock, osmotic shock, anisomycin and sodium arsenite, as well as pro-inflammatory stimuli such as bacterial lipopolysaccharide (LPS) and interleukin-1. Activation occurs through dual phosphorylation of Thr-180 and Tyr-182 by either of two dual specificity kinases, MAP2K3/MKK3 or MAP2K6/MKK6, and potentially also MAP2K4/MKK4, as well as by TAB1-mediated autophosphorylation. MAPK14 phosphorylated on both Thr-180 and Tyr-182 is 10-20-fold more active than MAPK14 phosphorylated only on Thr-180, whereas MAPK14 phosphorylated on Tyr-182 alone is inactive. whereas Thr-180 is necessary for catalysis, Tyr-182 may be required for auto-activation and substrate recognition. Phosphorylated at Tyr-323 by ZAP70 in an alternative activation pathway in response to TCR signaling in T-cells. This alternative pathway is inhibited by GADD45A. Inhibited by dual specificity phosphatases, such as DUSP1, DUSP10, and DUSP16. Specifically inhibited by the binding of pyridinyl-imidazole compounds, which are cytokine-suppressive anti-inflammatory drugs (CSAID). SB203580 is an inhibitor of MAPK14. Functionally, serine/threonine kinase which acts as an essential component of the MAP kinase signal transduction pathway. MAPK14 is one of the four p38 MAPKs which play an important role in the cascades of cellular responses evoked by extracellular stimuli such as pro-inflammatory cytokines or physical stress leading to direct activation of transcription factors. Accordingly, p38 MAPKs phosphorylate a broad range of proteins and it has been estimated that they may have approximately 200 to 300 substrates each. Some of the targets are downstream kinases which are activated through phosphorylation and further phosphorylate additional targets. RPS6KA5/MSK1 and RPS6KA4/MSK2 can directly phosphorylate and activate transcription factors such as CREB1, ATF1, the NF-kappa-B isoform RELA/NFKB3, STAT1 and STAT3, but can also phosphorylate histone H3 and the nucleosomal protein HMGN1. RPS6KA5/MSK1 and RPS6KA4/MSK2 play important roles in the rapid induction of immediate-early genes in response to stress or mitogenic stimuli, either by inducing chromatin remodeling or by recruiting the transcription machinery. On the other hand, two other kinase targets, MAPKAPK2/MK2 and MAPKAPK3/MK3, participate in the control of gene expression mostly at the post-transcriptional level, by phosphorylating ZFP36 (tristetraprolin) and ELAVL1, and by regulating EEF2K, which is important for the elongation of mRNA during translation. MKNK1/MNK1 and MKNK2/MNK2, two other kinases activated by p38 MAPKs, regulate protein synthesis by phosphorylating the initiation factor EIF4E2. MAPK14 also interacts with casein kinase II, leading to its activation through autophosphorylation and further phosphorylation of TP53/p53. In the cytoplasm, the p38 MAPK pathway is an important regulator of protein turnover. For example, CFLAR is an inhibitor of TNF-induced apoptosis whose proteasome-mediated degradation is regulated by p38 MAPK phosphorylation. In a similar way, MAPK14 phosphorylates the ubiquitin ligase SIAH2, regulating its activity towards EGLN3. MAPK14 may also inhibit the lysosomal degradation pathway of autophagy by interfering with the intracellular trafficking of the transmembrane protein ATG9. Another function of MAPK14 is to regulate the endocytosis of membrane receptors by different mechanisms that impinge on the small GTPase RAB5A. In addition, clathrin-mediated EGFR internalization induced by inflammatory cytokines and UV irradiation depends on MAPK14-mediated phosphorylation of EGFR itself as well as of RAB5A effectors. Ectodomain shedding of transmembrane proteins is regulated by p38 MAPKs as well. In response to inflammatory stimuli, p38 MAPKs phosphorylate the membrane-associated metalloprotease ADAM17. Such phosphorylation is required for ADAM17-mediated ectodomain shedding of TGF-alpha family ligands, which results in the activation of EGFR signaling and cell proliferation. Another p38 MAPK substrate is FGFR1. FGFR1 can be translocated from the extracellular space into the cytosol and nucleus of target cells, and regulates processes such as rRNA synthesis and cell growth. FGFR1 translocation requires p38 MAPK activation. In the nucleus, many transcription factors are phosphorylated and activated by p38 MAPKs in response to different stimuli. Classical examples include ATF1, ATF2, ATF6, ELK1, PTPRH, DDIT3, TP53/p53 and MEF2C and MEF2A. The p38 MAPKs are emerging as important modulators of gene expression by regulating chromatin modifiers and remodelers. The promoters of several genes involved in the inflammatory response, such as IL6, IL8 and IL12B, display a p38 MAPK-dependent enrichment of histone H3 phosphorylation on 'Ser-10' (H3S10ph) in LPS-stimulated myeloid cells. This phosphorylation enhances the accessibility of the cryptic NF-kappa-B-binding sites marking promoters for increased NF-kappa-B recruitment. Phosphorylates CDC25B and CDC25C which is required for binding to 14-3-3 proteins and leads to initiation of a G2 delay after ultraviolet radiation. Phosphorylates TIAR following DNA damage, releasing TIAR from GADD45A mRNA and preventing mRNA degradation. The p38 MAPKs may also have kinase-independent roles, which are thought to be due to the binding to targets in the absence of phosphorylation. Protein O-Glc-N-acylation catalyzed by the OGT is regulated by MAPK14, and, although OGT does not seem to be phosphorylated by MAPK14, their interaction increases upon MAPK14 activation induced by glucose deprivation. This interaction may regulate OGT activity by recruiting it to specific targets such as neurofilament H, stimulating its O-Glc-N-acylation. Required in mid-fetal development for the growth of embryo-derived blood vessels in the labyrinth layer of the placenta. Also plays an essential role in developmental and stress-induced erythropoiesis, through regulation of EPO gene expression. Phosphorylates S100A9 at 'Thr-113'. This Rattus norvegicus (Rat) protein is Mitogen-activated protein kinase 14.